The primary structure comprises 286 residues: Bifunctional protein FolD (286 aa).

NADP(+) is bound by residues 166–168 and isoleucine 232; that span reads GAS.

Belongs to the tetrahydrofolate dehydrogenase/cyclohydrolase family. As to quaternary structure, homodimer.

The enzyme catalyses (6R)-5,10-methylene-5,6,7,8-tetrahydrofolate + NADP(+) = (6R)-5,10-methenyltetrahydrofolate + NADPH. It catalyses the reaction (6R)-5,10-methenyltetrahydrofolate + H2O = (6R)-10-formyltetrahydrofolate + H(+). It functions in the pathway one-carbon metabolism; tetrahydrofolate interconversion. Its function is as follows. Catalyzes the oxidation of 5,10-methylenetetrahydrofolate to 5,10-methenyltetrahydrofolate and then the hydrolysis of 5,10-methenyltetrahydrofolate to 10-formyltetrahydrofolate. This Blochmanniella pennsylvanica (strain BPEN) protein is Bifunctional protein FolD.